The following is a 27-amino-acid chain: DELTA-pseudomyrmecitoxin-Pp1a subunit A (27 aa).

In terms of assembly, heterodimer composed of subunit A and subunit B (DELTA-PSDTX-Pp1a); disulfide-linked. Expressed by the venom gland.

Its subcellular location is the secreted. Its function is as follows. This heterodimer has insecticidal and cytotoxic properties. Induces immediate paralysis when injected into blowflies (Lucilia cuprina), and then death within 24 hours. Also inhibits the growth of Aedes albopictus mosquito C6/36 cells. The chain is DELTA-pseudomyrmecitoxin-Pp1a subunit A from Pseudomyrmex penetrator (Ant).